The primary structure comprises 143 residues: Transcriptional regulator SlyA (143 aa).

The HTH marR-type domain occupies 2–135 (ESTLGSDLAR…LSGLIDKLER (134 aa)). The H-T-H motif DNA-binding region spans 49–72 (QIQLAKAIGIEQPSLVRTLDQLEE).

It belongs to the SlyA family. As to quaternary structure, homodimer.

In terms of biological role, transcription regulator that can specifically activate or repress expression of target genes. This Yersinia enterocolitica serotype O:8 / biotype 1B (strain NCTC 13174 / 8081) protein is Transcriptional regulator SlyA.